A 655-amino-acid chain; its full sequence is Very long-chain specific acyl-CoA dehydrogenase, mitochondrial (655 aa).

Residues 1–40 constitute a mitochondrion transit peptide; sequence MRAARMAQSTGRQLLRLRGVSSWPGELLGQPRPGPARRPY. The disordered stretch occupies residues 22–66; the sequence is SWPGELLGQPRPGPARRPYASGVAQAAVDQSDSQPSEASTREKRA. The interval 41-482 is catalytic; it reads ASGVAQAAVD…ALQGCMDKGK (442 aa). A compositionally biased stretch (polar residues) spans 49-59; that stretch reads VDQSDSQPSEA. Residue lysine 71 is modified to N6-acetyllysine; alternate. Lysine 71 is subject to N6-succinyllysine; alternate. An N6-succinyllysine modification is found at lysine 195. 214–223 contacts FAD; it reads FCLTEPSSGS. S-nitrosocysteine is present on cysteine 237. Position 239 is an N6-acetyllysine; alternate (lysine 239). Lysine 239 bears the N6-succinyllysine; alternate mark. An FAD-binding site is contributed by 249–251; it reads WIS. Residues lysine 276 and lysine 278 each carry the N6-acetyllysine; alternate modification. Lysine 276 and lysine 278 each carry N6-succinyllysine; alternate. An N6-acetyllysine modification is found at lysine 298. Lysine 331 bears the N6-acetyllysine; alternate mark. N6-succinyllysine; alternate is present on lysine 331. An N6-succinyllysine modification is found at lysine 372. 461-463 serves as a coordination point for substrate; that stretch reads FEG. Glutamate 462 serves as the catalytic Proton acceptor. 464 to 466 contributes to the FAD binding site; the sequence is TND. Lysine 482 is modified (N6-acetyllysine; alternate). Residue lysine 482 is modified to N6-succinyllysine; alternate. Residues 483 to 516 are membrane-anchoring; the sequence is ELSGLGNALKNPFGNAGLLLGEAGKQLRRRAGLG. Serine 517 and serine 522 each carry phosphoserine. Lysine 550 carries the N6-acetyllysine modification. Lysine 556 is modified (N6-acetyllysine; alternate). Lysine 556 carries the post-translational modification N6-succinyllysine; alternate. Glutamine 562 serves as a coordination point for FAD. At lysine 639 the chain carries N6-succinyllysine.

It belongs to the acyl-CoA dehydrogenase family. Homodimer. Homodimerizes after import into the mitochondrion. It depends on FAD as a cofactor. S-nitrosylation at Cys-237 in liver improves catalytic efficiency.

The protein localises to the mitochondrion inner membrane. It catalyses the reaction a very-long-chain 2,3-saturated fatty acyl-CoA + oxidized [electron-transfer flavoprotein] + H(+) = a very-long-chain (2E)-enoyl-CoA + reduced [electron-transfer flavoprotein]. The catalysed reaction is dodecanoyl-CoA + oxidized [electron-transfer flavoprotein] + H(+) = (2E)-dodecenoyl-CoA + reduced [electron-transfer flavoprotein]. It carries out the reaction tetradecanoyl-CoA + oxidized [electron-transfer flavoprotein] + H(+) = (2E)-tetradecenoyl-CoA + reduced [electron-transfer flavoprotein]. The enzyme catalyses oxidized [electron-transfer flavoprotein] + hexadecanoyl-CoA + H(+) = (2E)-hexadecenoyl-CoA + reduced [electron-transfer flavoprotein]. It catalyses the reaction octadecanoyl-CoA + oxidized [electron-transfer flavoprotein] + H(+) = (2E)-octadecenoyl-CoA + reduced [electron-transfer flavoprotein]. The catalysed reaction is eicosanoyl-CoA + oxidized [electron-transfer flavoprotein] + H(+) = (2E)-eicosenoyl-CoA + reduced [electron-transfer flavoprotein]. It carries out the reaction docosanoyl-CoA + oxidized [electron-transfer flavoprotein] + H(+) = (2E)-docosenoyl-CoA + reduced [electron-transfer flavoprotein]. The enzyme catalyses tetracosanoyl-CoA + oxidized [electron-transfer flavoprotein] + H(+) = (2E)-tetracosenoyl-CoA + reduced [electron-transfer flavoprotein]. Its pathway is lipid metabolism; mitochondrial fatty acid beta-oxidation. Its function is as follows. Very long-chain specific acyl-CoA dehydrogenase is one of the acyl-CoA dehydrogenases that catalyze the first step of mitochondrial fatty acid beta-oxidation, an aerobic process breaking down fatty acids into acetyl-CoA and allowing the production of energy from fats. The first step of fatty acid beta-oxidation consists in the removal of one hydrogen from C-2 and C-3 of the straight-chain fatty acyl-CoA thioester, resulting in the formation of trans-2-enoyl-CoA. Among the different mitochondrial acyl-CoA dehydrogenases, very long-chain specific acyl-CoA dehydrogenase acts specifically on acyl-CoAs with saturated 12 to 24 carbons long primary chains. The sequence is that of Very long-chain specific acyl-CoA dehydrogenase, mitochondrial from Bos taurus (Bovine).